The following is a 197-amino-acid chain: Segregation and condensation protein B (197 aa).

It belongs to the ScpB family. In terms of assembly, homodimer. Homodimerization may be required to stabilize the binding of ScpA to the Smc head domains. Component of a cohesin-like complex composed of ScpA, ScpB and the Smc homodimer, in which ScpA and ScpB bind to the head domain of Smc. The presence of the three proteins is required for the association of the complex with DNA.

It localises to the cytoplasm. Its function is as follows. Participates in chromosomal partition during cell division. May act via the formation of a condensin-like complex containing Smc and ScpA that pull DNA away from mid-cell into both cell halves. This chain is Segregation and condensation protein B, found in Halalkalibacterium halodurans (strain ATCC BAA-125 / DSM 18197 / FERM 7344 / JCM 9153 / C-125) (Bacillus halodurans).